Reading from the N-terminus, the 802-residue chain is Potassium channel AKT2/3 (802 aa).

Residues 1 to 79 (MDLKYSASHC…PMDSRYRCWE (79 aa)) lie on the Cytoplasmic side of the membrane. The chain crosses the membrane as a helical span at residues 80–100 (FYMVLLVAYSAWVYPFEVAFL). Residues 101–109 (NSSPKRNLC) are Extracellular-facing. A helical membrane pass occupies residues 110–130 (IADNIVDLFFAVDIVLTFFVA). At 131–153 (YIDERTQLLVREPKQIAVRYLST) the chain is on the cytoplasmic side. The chain crosses the membrane as a helical span at residues 154–174 (WFLMDVASTIPFDAIGYLITG). At 175 to 183 (TSTLNITCN) the chain is on the extracellular side. N179 is a glycosylation site (N-linked (GlcNAc...) asparagine). Residues 184-204 (LLGLLRFWRLRRVKHLFTRLE) traverse the membrane as a helical; Voltage-sensor segment. Topologically, residues 205-218 (KDIRYSYFWIRCFR) are cytoplasmic. A helical membrane pass occupies residues 219–239 (LLSVTLFLVHCAGCSYYLIAD). Topologically, residues 240 to 265 (RYPHQGKTWTDAIPNFTETSLSIRYI) are extracellular. N254 carries an N-linked (GlcNAc...) asparagine glycan. The pore-forming intramembrane region spans 266-285 (AAIYWSITTMTTVGYGDLHA). The Extracellular segment spans residues 286–288 (SNT). The helical transmembrane segment at 289–309 (IEMVFITVYMLFNLGLTAYLI) threads the bilayer. Residues 310-802 (GNMTNLVVEG…KLYFVVNKII (493 aa)) are Cytoplasmic-facing. A nucleoside 3',5'-cyclic phosphate is bound at residue 394–513 (LFKGVSREIL…ATMLKNFLQH (120 aa)). ANK repeat units follow at residues 540–569 (NIASNLIAVVTTGNAALLDELLKAKLSPDI), 573–602 (KGKTPLHVAASRGYEDCVLVLLKHGCNIHI), 606–636 (NGNSALWEAIISKHYEIFRILYHFAAISDPH), 637–666 (IAGDLLCEAAKQNNVEVMKALLKQGLNVDT), and 670–699 (HGVTALQVAMAEDQMDMVNLLATNGADVVC). In terms of domain architecture, KHA spans 725-802 (RVSIYRGHPL…KLYFVVNKII (78 aa)).

The protein belongs to the potassium channel family. Plant (TC 1.A.1.4) subfamily. The potassium channel is probably composed of a homo- or heterotetrameric complex of pore-forming subunits. Interacts with the phosphatase PPC2A and the kinase CIPK6. May interact with AKT1, KAT1 and KAT3. Interacts with SLAC1. In terms of processing, dephosphorylated by PP2CA. As to expression, expressed mainly in the phloem tissues throughout the plant but also, at a lower level, in leaf epiderm, mesophyll and guard cells.

Its subcellular location is the endoplasmic reticulum membrane. Functionally, highly selective and weak inward-rectifying potassium channel. Plays a role in both loading and unloading potassium into/from the phloem sap. Seems to control sugar loading into phloem via a voltage-dependent process. Blocked by physiological concentrations of external calcium and by external acidification. May interact with the cytoskeleton or with regulatory proteins. Dephosphorylation by PP2CA not only leads to the inhibition of potassium currents but also to an increase of the voltage-dependence of the channel. Regulated by the CBL4/CIPK6 calcium sensor/protein kinase complex via a kinase interaction-dependent but phosphorylation-independent translocation of the channel to the plasma membrane. This Arabidopsis thaliana (Mouse-ear cress) protein is Potassium channel AKT2/3 (AKT2).